The following is a 1399-amino-acid chain: DNA-directed RNA polymerase subunit beta' (1399 aa).

Zn(2+) is bound by residues Cys-70, Cys-72, Cys-85, and Cys-88. 3 residues coordinate Mg(2+): Asp-460, Asp-462, and Asp-464. The Zn(2+) site is built by Cys-814, Cys-888, Cys-895, and Cys-898. The interval 1367–1399 (SERKRQRDLGKPQRVSASEAEAALTEALNSSGN) is disordered. Positions 1382–1399 (SASEAEAALTEALNSSGN) are enriched in low complexity.

The protein belongs to the RNA polymerase beta' chain family. In terms of assembly, the RNAP catalytic core consists of 2 alpha, 1 beta, 1 beta' and 1 omega subunit. When a sigma factor is associated with the core the holoenzyme is formed, which can initiate transcription. Requires Mg(2+) as cofactor. The cofactor is Zn(2+).

It catalyses the reaction RNA(n) + a ribonucleoside 5'-triphosphate = RNA(n+1) + diphosphate. Functionally, DNA-dependent RNA polymerase catalyzes the transcription of DNA into RNA using the four ribonucleoside triphosphates as substrates. In Pseudomonas paraeruginosa (strain DSM 24068 / PA7) (Pseudomonas aeruginosa (strain PA7)), this protein is DNA-directed RNA polymerase subunit beta'.